The chain runs to 193 residues: dCTP deaminase (193 aa).

DCTP-binding positions include 110 to 115 (RSSLAR), Asp-128, 136 to 138 (VLE), Tyr-171, Lys-178, and Gln-182. The active-site Proton donor/acceptor is Glu-138. The span at 170-181 (PYNRRQDAKYRD) shows a compositional bias: basic and acidic residues. Positions 170–193 (PYNRRQDAKYRDQQGAVASRIDKD) are disordered.

It belongs to the dCTP deaminase family. In terms of assembly, homotrimer.

It carries out the reaction dCTP + H2O + H(+) = dUTP + NH4(+). It functions in the pathway pyrimidine metabolism; dUMP biosynthesis; dUMP from dCTP (dUTP route): step 1/2. In terms of biological role, catalyzes the deamination of dCTP to dUTP. The protein is dCTP deaminase of Enterobacter sp. (strain 638).